A 343-amino-acid chain; its full sequence is Sodium/bile acid cotransporter 7-A (343 aa).

Residues 1-10 (MGLLERLRKE) lie on the Cytoplasmic side of the membrane. A helical membrane pass occupies residues 11 to 31 (WFIVGIILVIAAAKLEPTVGV). Residues 32-37 (KGGPLK) lie on the Extracellular side of the membrane. A helical membrane pass occupies residues 38–58 (PEITITYIAVSAIFFNSGLSL). Topologically, residues 59 to 71 (KTEELTNALMHVK) are cytoplasmic. A helical membrane pass occupies residues 72–92 (LHLFVQLFTLVFFPTAIWLFL). Over 93 to 116 (QVLSLTPINEWLLKGLQTVSCMPP) the chain is Extracellular. A helical membrane pass occupies residues 117–137 (PVSSAVILTKAVGGNEAAAIF). A topological domain (cytoplasmic) is located at residue Asn138. A helical membrane pass occupies residues 139 to 159 (SAFGSFLGIVVTPLLLLLFLG). The Extracellular segment spans residues 160-163 (SSSS). The chain crosses the membrane as a helical span at residues 164-184 (VPFTSIFSQLFMTVVVPLIIG). Topologically, residues 185-201 (QIVRRYIKDWLERKKPP) are cytoplasmic. The chain crosses the membrane as a helical span at residues 202–222 (FGAISSCVLLMIIYTTFCDTF). Topologically, residues 223-234 (SNPNIDLDTFSL) are extracellular. Residues 235 to 255 (VVIVFIIFFIQLAFMLLTFLF) form a helical membrane-spanning segment. Topologically, residues 256-270 (STSKNSGFTPADTVA) are cytoplasmic. Residues 271 to 291 (IVFCSTHKSLTLGIPMLKIVF) form a helical membrane-spanning segment. The Extracellular segment spans residues 292 to 298 (VGYEHLS). A helical membrane pass occupies residues 299 to 319 (LISVPLLIYHPAQILLGSVLV). At 320-343 (PTIKSWMLSRQKALKLTRQPKIPL) the chain is on the cytoplasmic side.

Belongs to the bile acid:sodium symporter (BASS) (TC 2.A.28) family. Strongly expressed in small intestine. Moderately expressed in spleen. Weakly expressed in skeletal muscle. Not detected in other tissues tested.

The protein resides in the cell membrane. The protein localises to the endoplasmic reticulum membrane. It is found in the golgi apparatus membrane. Its function is as follows. Involved in teeth and skeletal development. Has an essential role in the biosynthesis and trafficking of glycosaminoglycans and glycoproteins to produce a proper functioning extracellular matrix. Required for extracellular matrix mineralization. Also involved in the regulation of cellular calcium homeostasis. Does not show transport activity towards bile acids or steroid sulfates. In Xenopus laevis (African clawed frog), this protein is Sodium/bile acid cotransporter 7-A (slc10a7-a).